We begin with the raw amino-acid sequence, 192 residues long: Casparian strip membrane protein 4 (192 aa).

The Cytoplasmic portion of the chain corresponds to 1–29; it reads MTKDVVIEHGESSKAPLVPAPVAAGVGRA. The helical transmembrane segment at 30–50 threads the bilayer; the sequence is VSIADVFLRFLSIVATIASAI. At 51–79 the chain is on the extracellular side; that stretch reads SMGTTNETLPFFTQFIQFEAKYSDLPSFT. Asn-56 carries N-linked (GlcNAc...) asparagine glycosylation. The chain crosses the membrane as a helical span at residues 80 to 100; the sequence is FFVAANAVVCTYLVLSIPLSI. Over 101 to 112 the chain is Cytoplasmic; the sequence is VHIIRPRARYSR. Residues 113-133 form a helical membrane-spanning segment; that stretch reads LILVFFDAVMLALLTAGASAA. Topologically, residues 134–166 are extracellular; it reads AAIVYLAHKGNVRANWFAICQQFDSFCERISGS. Residues 167 to 187 form a helical membrane-spanning segment; sequence LIGSFAAMVLLIVLIFLSAFA. At 188–192 the chain is on the cytoplasmic side; sequence LARRH.

The protein belongs to the Casparian strip membrane proteins (CASP) family. As to quaternary structure, homodimer and heterodimers.

The protein resides in the cell membrane. In terms of biological role, regulates membrane-cell wall junctions and localized cell wall deposition. Required for establishment of the Casparian strip membrane domain (CSD) and the subsequent formation of Casparian strips, a cell wall modification of the root endodermis that determines an apoplastic barrier between the intraorganismal apoplasm and the extraorganismal apoplasm and prevents lateral diffusion. This chain is Casparian strip membrane protein 4, found in Sorghum bicolor (Sorghum).